We begin with the raw amino-acid sequence, 153 residues long: 6,7-dimethyl-8-ribityllumazine synthase (153 aa).

5-amino-6-(D-ribitylamino)uracil is bound by residues F22, 56–58 (AFE), and 80–82 (AVI). 85–86 (ST) serves as a coordination point for (2S)-2-hydroxy-3-oxobutyl phosphate. The active-site Proton donor is the H88. Residue F113 coordinates 5-amino-6-(D-ribitylamino)uracil. R127 is a (2S)-2-hydroxy-3-oxobutyl phosphate binding site.

The protein belongs to the DMRL synthase family.

The enzyme catalyses (2S)-2-hydroxy-3-oxobutyl phosphate + 5-amino-6-(D-ribitylamino)uracil = 6,7-dimethyl-8-(1-D-ribityl)lumazine + phosphate + 2 H2O + H(+). The protein operates within cofactor biosynthesis; riboflavin biosynthesis; riboflavin from 2-hydroxy-3-oxobutyl phosphate and 5-amino-6-(D-ribitylamino)uracil: step 1/2. Its function is as follows. Catalyzes the formation of 6,7-dimethyl-8-ribityllumazine by condensation of 5-amino-6-(D-ribitylamino)uracil with 3,4-dihydroxy-2-butanone 4-phosphate. This is the penultimate step in the biosynthesis of riboflavin. In Clostridium botulinum (strain Alaska E43 / Type E3), this protein is 6,7-dimethyl-8-ribityllumazine synthase.